The chain runs to 228 residues: Ribosomal RNA small subunit methyltransferase G (228 aa).

S-adenosyl-L-methionine is bound by residues Gly89, Leu94, 140–141, and Arg159; that span reads VE.

This sequence belongs to the methyltransferase superfamily. RNA methyltransferase RsmG family.

It localises to the cytoplasm. The catalysed reaction is guanosine(527) in 16S rRNA + S-adenosyl-L-methionine = N(7)-methylguanosine(527) in 16S rRNA + S-adenosyl-L-homocysteine. Its function is as follows. Specifically methylates the N7 position of guanine in position 527 of 16S rRNA. The polypeptide is Ribosomal RNA small subunit methyltransferase G (Burkholderia cenocepacia (strain ATCC BAA-245 / DSM 16553 / LMG 16656 / NCTC 13227 / J2315 / CF5610) (Burkholderia cepacia (strain J2315))).